A 221-amino-acid chain; its full sequence is Probable nicotinate-nucleotide adenylyltransferase (221 aa).

The protein belongs to the NadD family.

The catalysed reaction is nicotinate beta-D-ribonucleotide + ATP + H(+) = deamido-NAD(+) + diphosphate. The protein operates within cofactor biosynthesis; NAD(+) biosynthesis; deamido-NAD(+) from nicotinate D-ribonucleotide: step 1/1. Catalyzes the reversible adenylation of nicotinate mononucleotide (NaMN) to nicotinic acid adenine dinucleotide (NaAD). The protein is Probable nicotinate-nucleotide adenylyltransferase of Marinomonas sp. (strain MWYL1).